A 180-amino-acid chain; its full sequence is uncharacterized protein (180 aa).

Positions 1–22 (MKRSIIAAAVFSSFFMSAGVFA) are cleaved as a signal peptide.

Belongs to the fimbrial protein family.

Part of the yehABCD fimbrial operon. Could contribute to adhesion to various surfaces in specific environmental niches. This is an uncharacterized protein from Escherichia coli (strain K12).